A 276-amino-acid chain; its full sequence is 6-chlorohydroxyquinol 1,2-dioxygenase (276 aa).

Fe cation is bound by residues tyrosine 157, tyrosine 191, histidine 215, and histidine 217.

Belongs to the intradiol ring-cleavage dioxygenase family. The cofactor is Fe(3+).

It participates in aromatic compound metabolism. It functions in the pathway xenobiotic degradation. Its function is as follows. Involved in the degradation of 2,4,6-trichlorophenol (2,4,6-TCP). May catalyze the oxidation of 6-chlorohydroxyquinol (6-CHQ) to 2-chloromaleylacetate (2-CMA). This Cupriavidus pinatubonensis (strain JMP 134 / LMG 1197) (Cupriavidus necator (strain JMP 134)) protein is 6-chlorohydroxyquinol 1,2-dioxygenase.